Consider the following 335-residue polypeptide: MAPEINTKLTVPVHSATGGEKRAYVTFLAGTGDYVKGVVGLAKGLRKAKSKYPLVVAVLPDVPEDHRKQLVDQGCVVKEIEPVYPPENQTEFAMAYYVINYSKLRIWEFVEYNKMIYLDGDIQVFDNIDHLFDLPNGQFYAVMDCFCEKTWSHSPQYKIGYCQQCPDKVTWPEAKLGPKPPLYFNAGMFVYEPNLSTYHNLLETVKIVPPTLFAEQDFLNMYFKDIYKPIPPVYNLVLAMLWRHPENIELDQVKVVHYCAAGAKPWRFTGEEENMDREDIKMLVKKWWDIYNDESLDYKNVVIGDSHKKQQTLQQFIEALSEAGALQYVKAPSAA.

K103 is an active-site residue. Mn(2+)-binding residues include D119, D121, and H257.

It belongs to the glycosyltransferase 8 family. Galactosyltransferase subfamily. Requires a divalent metal cation as cofactor. As to expression, accumulates in mature seeds.

It localises to the cytoplasm. It catalyses the reaction myo-inositol + UDP-alpha-D-galactose = alpha-D-galactosyl-(1-&gt;3)-1D-myo-inositol + UDP + H(+). Functionally, galactinol synthase involved in the biosynthesis of raffinose family oligosaccharides (RFOs) that function as osmoprotectants. Promotes stress tolerance of factors such as drought, chilling, salinity and methylviologen (MV), a superoxide radical generating drug, by mediating an increase in levels of the endogenous osmoprotective compounds, galactinol and raffinose. The polypeptide is Galactinol synthase 2 (GOLS2) (Arabidopsis thaliana (Mouse-ear cress)).